Consider the following 231-residue polypeptide: Sensory transduction protein BceR (231 aa).

The Response regulatory domain maps to 3-116 (KLLLIEDDES…VLIAKIQAMF (114 aa)). Asp52 bears the 4-aspartylphosphate mark. A DNA-binding region (ompR/PhoB-type) is located at residues 127 to 225 (STIKTWCGAA…KVGQGYIAKE (99 aa)).

In terms of processing, phosphorylated by BceS.

It is found in the cytoplasm. Functionally, member of the two-component regulatory system BceS/BceR involved in the regulation of bacitracin resistance. When activated by BceS, binds to the upstream region of the bceAB promoter and up-regulates the expression of these two genes. The chain is Sensory transduction protein BceR (bceR) from Bacillus subtilis (strain 168).